The following is a 171-amino-acid chain: Endoribonuclease YbeY (171 aa).

His-130, His-134, and His-140 together coordinate Zn(2+).

Belongs to the endoribonuclease YbeY family. It depends on Zn(2+) as a cofactor.

It is found in the cytoplasm. Functionally, single strand-specific metallo-endoribonuclease involved in late-stage 70S ribosome quality control and in maturation of the 3' terminus of the 16S rRNA. The protein is Endoribonuclease YbeY of Neisseria meningitidis serogroup C / serotype 2a (strain ATCC 700532 / DSM 15464 / FAM18).